The chain runs to 189 residues: Glucose-6-phosphate isomerase (189 aa).

Fe cation-binding residues include His88, His90, Glu97, and His136.

The protein belongs to the archaeal-type GPI family. Homodimer.

It is found in the cytoplasm. The enzyme catalyses alpha-D-glucose 6-phosphate = beta-D-fructose 6-phosphate. The protein operates within carbohydrate degradation; glycolysis; D-glyceraldehyde 3-phosphate and glycerone phosphate from D-glucose: step 2/4. The protein is Glucose-6-phosphate isomerase of Thermococcus gammatolerans (strain DSM 15229 / JCM 11827 / EJ3).